A 472-amino-acid chain; its full sequence is Zinc finger CCCH domain-containing protein 59 (472 aa).

Positions 87–139 (YKSPEGNRPRQNAANGSAKPQVIGTGHRVSNQPRKNAVYGPRSSSLSDTRGCG) are disordered. Residues 145–172 (SPKKSVCNFWKDGNCKKGEKCQFLHSWS) form a C3H1-type zinc finger. WD repeat units lie at residues 185-226 (GHKN…RSIN), 261-301 (HLEG…SDPF), 310-347 (HHSGEVTCFVVGGEVLYSGSVDKTIKVWDLNTLQCRMT), 350-387 (QHIGTVTSLLCWDKCLISSSLDGTIKLWACSENESLKV), and 436-472 (FSTQTICTLTIGPGGLLFSGDKSGNLRVWSLASGTKV).

The protein is Zinc finger CCCH domain-containing protein 59 (ZFWD3) of Arabidopsis thaliana (Mouse-ear cress).